Consider the following 463-residue polypeptide: Chaperone SurA (463 aa).

Positions Met1–Ala25 are cleaved as a signal peptide. PpiC domains are found at residues Gly175 to Glu277 and Ala291 to Gly390. Residues Ala439 to His463 form a disordered region.

It is found in the periplasm. The catalysed reaction is [protein]-peptidylproline (omega=180) = [protein]-peptidylproline (omega=0). Its function is as follows. Chaperone involved in the correct folding and assembly of outer membrane proteins. Recognizes specific patterns of aromatic residues and the orientation of their side chains, which are found more frequently in integral outer membrane proteins. May act in both early periplasmic and late outer membrane-associated steps of protein maturation. The sequence is that of Chaperone SurA from Xylella fastidiosa (strain Temecula1 / ATCC 700964).